Here is a 356-residue protein sequence, read N- to C-terminus: Alanine racemase (356 aa).

The active-site Proton acceptor; specific for D-alanine is Lys35. N6-(pyridoxal phosphate)lysine is present on Lys35. Residue Arg130 participates in substrate binding. Catalysis depends on Tyr253, which acts as the Proton acceptor; specific for L-alanine. Substrate is bound at residue Met301.

The protein belongs to the alanine racemase family. Pyridoxal 5'-phosphate serves as cofactor.

It carries out the reaction L-alanine = D-alanine. It participates in amino-acid biosynthesis; D-alanine biosynthesis; D-alanine from L-alanine: step 1/1. Functionally, catalyzes the interconversion of L-alanine and D-alanine. May also act on other amino acids. In Paraburkholderia phytofirmans (strain DSM 17436 / LMG 22146 / PsJN) (Burkholderia phytofirmans), this protein is Alanine racemase (alr).